Reading from the N-terminus, the 230-residue chain is Octanoyltransferase (230 aa).

A BPL/LPL catalytic domain is found at 38-215; sequence AGGADTLLLL…AVCAALDGVL (178 aa). Substrate-binding positions include 76–83, 145–147, and 158–160; these read RGGKITWH, AIG, and GFA. The Acyl-thioester intermediate role is filled by Cys-176.

The protein belongs to the LipB family.

It is found in the cytoplasm. It carries out the reaction octanoyl-[ACP] + L-lysyl-[protein] = N(6)-octanoyl-L-lysyl-[protein] + holo-[ACP] + H(+). Its pathway is protein modification; protein lipoylation via endogenous pathway; protein N(6)-(lipoyl)lysine from octanoyl-[acyl-carrier-protein]: step 1/2. In terms of biological role, catalyzes the transfer of endogenously produced octanoic acid from octanoyl-acyl-carrier-protein onto the lipoyl domains of lipoate-dependent enzymes. Lipoyl-ACP can also act as a substrate although octanoyl-ACP is likely to be the physiological substrate. The sequence is that of Octanoyltransferase from Mycobacterium tuberculosis (strain ATCC 25177 / H37Ra).